Here is a 1648-residue protein sequence, read N- to C-terminus: eIF-2-alpha kinase GCN2 (1648 aa).

The tract at residues 1-26 is disordered; the sequence is MAGGRGASGRGRAEPQESYSQRQDHE. Positions 25–137 constitute an RWD domain; it reads HELQALEAIY…HHVQSFLSEH (113 aa). Residues 146-205 are a coiled coil; sequence HEEMLERQAQEKQQRLLEARRKEEQEQREILHEIQRRKEEIKEEKKRKEMAKQERLEITS. S230 carries the phosphoserine modification. 2 consecutive Protein kinase domains span residues 286-538 and 589-1000; these read VGSD…HSFI and FEEL…SELL. Residues 595–603 and K618 each bind ATP; that span reads LGKGAFGAV. The disordered stretch occupies residues 661–784; it reads PAVPGTPPPD…CNQKDGSHEI (124 aa). Residue T666 is modified to Phosphothreonine. Polar residues-rich tracts occupy residues 673–686 and 704–722; these read PQAQ…GKTS and LSSS…STRF. Acidic residues-rich tracts occupy residues 730–739 and 753–763; these read SSDEEDEDER and SDSDIIFDNED. Residues 775–784 show a composition bias toward basic and acidic residues; it reads CNQKDGSHEI. D846 functions as the Proton acceptor in the catalytic mechanism. At T869 the chain carries Phosphothreonine. 2 positions are modified to phosphothreonine; by autocatalysis: T898 and T903. The histidyl-tRNA synthetase-like stretch occupies residues 1021 to 1492; it reads IDGKAYRTMM…DHVMQKLRTK (472 aa). N6-acetyllysine is present on K1258.

The protein belongs to the protein kinase superfamily. Ser/Thr protein kinase family. GCN2 subfamily. In terms of assembly, homodimer; homodimerization is important for kinase activation by uncharged tRNAs. Interacts with GCN1; this interaction stimulates EIF2AK4/GCN2 kinase activity and is impaired by IMPACT upon a variety of stress conditions, such as amino acid depletion, UV-C irradiation, proteasome inhibitor treatment and glucose deprivation. Interacts with DNAJC3; this interaction inhibits EIF2AK4/GCN2 kinase activity during endoplasmic reticulum (ER), hypothermic and amino acid-starving stress conditions. Interacts with MAP3K20; activates EIF2AK4/GCN2 kinase activity in response to moderate ribotoxic stress. Autophosphorylated; autophosphorylation on Thr-898 is increased upon amino acid starvation and in UV irradiation cells and inhibited in presence of IMPACT. In terms of tissue distribution, expressed in liver. Expressed predominantly in the hippocampal CA1 region and the dentate gyrus, and to a lesser degree in CA3 (at protein level). Expressed in liver, lung, brain, kidney, skeletal muscle and testis. Expressed weakly in heart and spleen. Expressed in the hippocampal CA1 and CA3 regions, the dentate gyrus and cerebellum. Isoform 1 is widely expressed. Isoform 1 is expressed in brain, liver, skeletal muscle and testis. Isoform 3 is expressed in lung, brain, testis, prostate and choroid plexus. Isoform 4 is expressed in muscle, lung, kidney, brain, testis and prostate.

Its subcellular location is the cytoplasm. It catalyses the reaction L-seryl-[protein] + ATP = O-phospho-L-seryl-[protein] + ADP + H(+). The enzyme catalyses L-threonyl-[protein] + ATP = O-phospho-L-threonyl-[protein] + ADP + H(+). With respect to regulation, (Microbial infection) Kinase activity is enhanced by alphavirus genomic RNA sequences. Kinase activity is stimulated upon binding to uncharged tRNAs. Activated by serum starvation (in vitro). Its function is as follows. Metabolic-stress sensing protein kinase that phosphorylates the alpha subunit of eukaryotic translation initiation factor 2 (EIF2S1/eIF-2-alpha) in response to low amino acid availability. Plays a role as an activator of the integrated stress response (ISR) required for adaptation to amino acid starvation. EIF2S1/eIF-2-alpha phosphorylation in response to stress converts EIF2S1/eIF-2-alpha into a global protein synthesis inhibitor, leading to a global attenuation of cap-dependent translation, and thus to a reduced overall utilization of amino acids, while concomitantly initiating the preferential translation of ISR-specific mRNAs, such as the transcriptional activator ATF4, and hence allowing ATF4-mediated reprogramming of amino acid biosynthetic gene expression to alleviate nutrient depletion. Required for the translational induction of protein kinase PRKCH following amino acid starvation. Binds uncharged tRNAs. Involved in cell cycle arrest by promoting cyclin D1 mRNA translation repression after the unfolded protein response pathway (UPR) activation or cell cycle inhibitor CDKN1A/p21 mRNA translation activation in response to amino acid deprivation. Plays a role in the consolidation of synaptic plasticity, learning as well as formation of long-term memory. Plays a role in neurite outgrowth inhibition. Plays a role in feeding behavior to maintain amino acid homeostasis; contributes to the innate aversion toward diets of imbalanced amino acid composition. Plays a proapoptotic role in response to glucose deprivation. Promotes global cellular protein synthesis repression in response to UV irradiation independently of the stress-activated protein kinase/c-Jun N-terminal kinase (SAPK/JNK) and p38 MAPK signaling pathways. (Microbial infection) Plays a role in the antiviral response against alphavirus infection; impairs early viral mRNA translation of the incoming genomic virus RNA, thus preventing alphavirus replication. Functionally, (Microbial infection) Plays a role in modulating the adaptive immune response to Yellow fever virus infection; promotes dendritic cells to initiate autophagy and antigene presentation to both CD4(+) and CD8(+) T-cells under amino acid starvation. The sequence is that of eIF-2-alpha kinase GCN2 from Mus musculus (Mouse).